Consider the following 410-residue polypeptide: Protein LTV1 homolog (410 aa).

Disordered stretches follow at residues 142 to 165 (VYRS…DEMY) and 325 to 378 (EMDI…ARKL). Composition is skewed to acidic residues over residues 151–165 (DSEE…DEMY) and 325–345 (EMDI…DDDK). The span at 357–366 (PKNETPEQRS) shows a compositional bias: basic and acidic residues. Positions 363-389 (EQRSLRKKAVKEARKLRRVEKKANKTM) form a coiled coil. The span at 367–378 (LRKKAVKEARKL) shows a compositional bias: basic residues.

This sequence belongs to the LTV1 family.

This chain is Protein LTV1 homolog, found in Caenorhabditis elegans.